A 245-amino-acid polypeptide reads, in one-letter code: NAD(P)H-quinone oxidoreductase subunit K (245 aa).

Residues Cys-58, Cys-59, Cys-123, and Cys-154 each coordinate [4Fe-4S] cluster.

This sequence belongs to the complex I 20 kDa subunit family. In terms of assembly, NDH-1 can be composed of about 15 different subunits; different subcomplexes with different compositions have been identified which probably have different functions. It depends on [4Fe-4S] cluster as a cofactor.

The protein resides in the cellular thylakoid membrane. It catalyses the reaction a plastoquinone + NADH + (n+1) H(+)(in) = a plastoquinol + NAD(+) + n H(+)(out). The enzyme catalyses a plastoquinone + NADPH + (n+1) H(+)(in) = a plastoquinol + NADP(+) + n H(+)(out). NDH-1 shuttles electrons from an unknown electron donor, via FMN and iron-sulfur (Fe-S) centers, to quinones in the respiratory and/or the photosynthetic chain. The immediate electron acceptor for the enzyme in this species is believed to be plastoquinone. Couples the redox reaction to proton translocation, and thus conserves the redox energy in a proton gradient. Cyanobacterial NDH-1 also plays a role in inorganic carbon-concentration. The chain is NAD(P)H-quinone oxidoreductase subunit K from Trichormus variabilis (strain ATCC 29413 / PCC 7937) (Anabaena variabilis).